We begin with the raw amino-acid sequence, 523 residues long: Peptidyl-prolyl cis-trans isomerase 4 (523 aa).

The U-box domain occupies 38–111 (KRLPINHCSL…GKFRCPVTFR (74 aa)). A PPIase cyclophilin-type domain is found at 278–433 (KNAFVRLVTN…VSVVIMRAEV (156 aa)).

This sequence belongs to the cyclophilin-type PPIase family. PPIL2 subfamily. In terms of assembly, interacts with mep-1. As to expression, exclusively in the larval body wall striated muscle cells.

The protein resides in the nucleus. The catalysed reaction is [protein]-peptidylproline (omega=180) = [protein]-peptidylproline (omega=0). It catalyses the reaction S-ubiquitinyl-[E2 ubiquitin-conjugating enzyme]-L-cysteine + [acceptor protein]-L-lysine = [E2 ubiquitin-conjugating enzyme]-L-cysteine + N(6)-ubiquitinyl-[acceptor protein]-L-lysine.. Its pathway is protein modification; protein ubiquitination. In terms of biological role, may catalyze the cis-trans isomerization of proline imidic peptide bonds in oligopeptides thereby assisting the folding of proteins. May also function as a chaperone, playing a role in intracellular transport of proteins. May also have a protein ubiquitin ligase activity acting as an E3 ubiquitin protein ligase or as a ubiquitin-ubiquitin ligase promoting elongation of ubiquitin chains on proteins. Influences the hermaphrodite switch from spermatogenesis to oogenesis. Required for body wall muscle cell development. The polypeptide is Peptidyl-prolyl cis-trans isomerase 4 (cyn-4) (Caenorhabditis elegans).